The primary structure comprises 302 residues: Glutamyl-Q tRNA(Asp) synthetase (302 aa).

L-glutamate contacts are provided by residues 13 to 17 (RFAPS) and Asp-49. Residues 16 to 26 (PSPTGPLHLGS) carry the 'HIGH' region motif. 4 residues coordinate Zn(2+): Cys-105, Cys-107, Tyr-119, and Cys-123. Positions 178 and 196 each coordinate L-glutamate. Residues 234 to 238 (KLSKQ) carry the 'KMSKS' region motif. Position 237 (Lys-237) interacts with ATP.

Belongs to the class-I aminoacyl-tRNA synthetase family. GluQ subfamily. Requires Zn(2+) as cofactor.

Catalyzes the tRNA-independent activation of glutamate in presence of ATP and the subsequent transfer of glutamate onto a tRNA(Asp). Glutamate is transferred on the 2-amino-5-(4,5-dihydroxy-2-cyclopenten-1-yl) moiety of the queuosine in the wobble position of the QUC anticodon. This chain is Glutamyl-Q tRNA(Asp) synthetase, found in Methylococcus capsulatus (strain ATCC 33009 / NCIMB 11132 / Bath).